The following is a 142-amino-acid chain: MFQGASALTLDAKGRMSVPARYREALQGQAEGRVTVTKHPDGCLLLFPRPEWEVFRAKIAALPMDAHWWRRIFLGNAMDVDLDSAGRILVSPELRMAAGLEKEVMLLGMGSHFELWDSQTYNAKEQAAMAQGMPDALKNFTF.

SpoVT-AbrB domains follow at residues 5–51 (ASAL…PRPE) and 77–120 (AMDV…DSQT).

Belongs to the MraZ family. As to quaternary structure, forms oligomers.

The protein resides in the cytoplasm. The protein localises to the nucleoid. The polypeptide is Transcriptional regulator MraZ (Burkholderia cenocepacia (strain ATCC BAA-245 / DSM 16553 / LMG 16656 / NCTC 13227 / J2315 / CF5610) (Burkholderia cepacia (strain J2315))).